The chain runs to 38 residues: Alpha-conotoxin PeIA (38 aa).

Residues 1–21 (FDGRNAAANDKASDLVALTVR) constitute a propeptide that is removed on maturation. Disulfide bonds link Cys23–Cys29 and Cys24–Cys37. The ser-Xaa-Pro motif, crucial for potent interaction with nAChR stretch occupies residues 25–27 (SHP). Cys37 carries the post-translational modification Cysteine amide.

It belongs to the conotoxin A superfamily. Post-translationally, the hydroxylation at position Pro-27 is critical, since an hydroxylation at this position decreases potency of the toxin to inhibit both alpha-3-beta-2 (1300-fold) and alpha-6/alpha-3-beta-2-beta-3 (130-fold) nAChRs. In terms of processing, a non-modified residue at position Pro-34 is critical, since a hydroxylation at this position decreases potency of the toxin to inhibit alpha-3-beta-2 (1-45-fold) and increases potency to inhibit alpha-6/alpha-3-beta-2-beta-3 (1.77-fold) nAChRs. In terms of tissue distribution, expressed by the venom duct.

The protein resides in the secreted. In terms of biological role, alpha-conotoxins act on postsynaptic membranes, they bind to the nicotinic acetylcholine receptors (nAChR) and thus inhibit them. This synthetic peptide potently and reversibly blocks alpha-9-alpha-10/CHRNA9-CHRNA10 nAChR (IC(50)=6.9-54.9 nM), alpha-3-beta-2/CHRNA3-CHRNB2 (IC(50)=9.7-97.5 nM) and alpha-6/alpha-3-beta-2-beta-3 (CHRNA6/CHRNA3-CHRNB2-CHRNB3) (IC(50)=11.1-17.2 nM). It also inhibits alpha-6/alpha-3-beta-4 (CHRNA6/CHRNA3-CHRNB4) nAChR with a higher potency on human (IC(50)=6.75 nM) than on rat receptors (IC(50)=130-147 nM). Also shows a weak ability to inhibit alpha-3-beta-4/CHRNA3-CHRNB4 (IC(50)=480-1500 nM). This synthetic toxin also inhibits N-type calcium channels (Ca2.2/CACNA1B) (IC(50)=1.1 nM) via the activation of the G protein-coupled GABA(B) receptor in DRG neurons. Also exhibits inhibition of D.melanogaster alpha-7/CHRNA7 nAChRs. The protein is Alpha-conotoxin PeIA of Conus pergrandis (Grand cone).